Here is a 134-residue protein sequence, read N- to C-terminus: Phosphoribosyl-AMP cyclohydrolase (134 aa).

D93 lines the Mg(2+) pocket. Residue C94 coordinates Zn(2+). D95 and D97 together coordinate Mg(2+). 2 residues coordinate Zn(2+): C112 and C119.

Belongs to the PRA-CH family. In terms of assembly, homodimer. Requires Mg(2+) as cofactor. The cofactor is Zn(2+).

The protein localises to the cytoplasm. It carries out the reaction 1-(5-phospho-beta-D-ribosyl)-5'-AMP + H2O = 1-(5-phospho-beta-D-ribosyl)-5-[(5-phospho-beta-D-ribosylamino)methylideneamino]imidazole-4-carboxamide. It functions in the pathway amino-acid biosynthesis; L-histidine biosynthesis; L-histidine from 5-phospho-alpha-D-ribose 1-diphosphate: step 3/9. Functionally, catalyzes the hydrolysis of the adenine ring of phosphoribosyl-AMP. The sequence is that of Phosphoribosyl-AMP cyclohydrolase from Caulobacter sp. (strain K31).